The sequence spans 404 residues: LL-diaminopimelate aminotransferase (404 aa).

Residues Tyr-15 and Gly-42 each coordinate substrate. Residues Tyr-72, 108–109 (AK), Tyr-132, Asn-188, Tyr-219, and 247–249 (SFS) contribute to the pyridoxal 5'-phosphate site. Residues Lys-109, Tyr-132, and Asn-188 each coordinate substrate. N6-(pyridoxal phosphate)lysine is present on Lys-250. Pyridoxal 5'-phosphate contacts are provided by Arg-258 and Asn-288. The substrate site is built by Asn-288 and Arg-384.

This sequence belongs to the class-I pyridoxal-phosphate-dependent aminotransferase family. LL-diaminopimelate aminotransferase subfamily. As to quaternary structure, homodimer. Pyridoxal 5'-phosphate is required as a cofactor.

The enzyme catalyses (2S,6S)-2,6-diaminopimelate + 2-oxoglutarate = (S)-2,3,4,5-tetrahydrodipicolinate + L-glutamate + H2O + H(+). The protein operates within amino-acid biosynthesis; L-lysine biosynthesis via DAP pathway; LL-2,6-diaminopimelate from (S)-tetrahydrodipicolinate (aminotransferase route): step 1/1. Functionally, involved in the synthesis of meso-diaminopimelate (m-DAP or DL-DAP), required for both lysine and peptidoglycan biosynthesis. Catalyzes the direct conversion of tetrahydrodipicolinate to LL-diaminopimelate. This Lachnospira eligens (strain ATCC 27750 / DSM 3376 / VPI C15-48 / C15-B4) (Eubacterium eligens) protein is LL-diaminopimelate aminotransferase.